The sequence spans 233 residues: Ribonuclease 3 (233 aa).

The RNase III domain maps to 4 to 126 (LNKLMERLGH…IVGSIYIDAG (123 aa)). Glu-39 lines the Mg(2+) pocket. Asp-43 is an active-site residue. Residues Asp-112 and Glu-115 each coordinate Mg(2+). Glu-115 is an active-site residue. The DRBM domain occupies 153–222 (DAKSLLQEWL…AKRFLELLDD (70 aa)).

This sequence belongs to the ribonuclease III family. As to quaternary structure, homodimer. It depends on Mg(2+) as a cofactor.

It is found in the cytoplasm. It carries out the reaction Endonucleolytic cleavage to 5'-phosphomonoester.. Digests double-stranded RNA. Involved in the processing of primary rRNA transcript to yield the immediate precursors to the large and small rRNAs (23S and 16S). Processes some mRNAs, and tRNAs when they are encoded in the rRNA operon. Processes pre-crRNA and tracrRNA of type II CRISPR loci if present in the organism. The polypeptide is Ribonuclease 3 (Coxiella burnetii (strain CbuG_Q212) (Coxiella burnetii (strain Q212))).